The chain runs to 107 residues: Iron-binding protein IscA (107 aa).

Residues Cys35, Cys99, and Cys101 each contribute to the Fe cation site.

This sequence belongs to the HesB/IscA family. As to quaternary structure, homodimer; may form tetramers and higher multimers. Requires Fe cation as cofactor.

Its function is as follows. Is able to transfer iron-sulfur clusters to apo-ferredoxin. Multiple cycles of [2Fe2S] cluster formation and transfer are observed, suggesting that IscA acts catalytically. Recruits intracellular free iron so as to provide iron for the assembly of transient iron-sulfur cluster in IscU in the presence of IscS, L-cysteine and the thioredoxin reductase system TrxA/TrxB. This is Iron-binding protein IscA from Proteus mirabilis (strain HI4320).